Reading from the N-terminus, the 75-residue chain is Pro-glucagon (75 aa).

It belongs to the glucagon family.

It is found in the secreted. Functionally, plays a key role in glucose metabolism and homeostasis. Regulates blood glucose by increasing gluconeogenesis and decreasing glycolysis. The protein is Pro-glucagon (gcg) of Amia calva (Bowfin).